The primary structure comprises 361 residues: Phospho-N-acetylmuramoyl-pentapeptide-transferase (361 aa).

10 helical membrane passes run L28–L48, T74–L94, I99–A119, S133–D153, L168–S188, V203–I223, T236–F256, V263–I283, I288–V308, and K338–L358.

Belongs to the glycosyltransferase 4 family. MraY subfamily. The cofactor is Mg(2+).

It localises to the cell membrane. The catalysed reaction is UDP-N-acetyl-alpha-D-muramoyl-L-alanyl-gamma-D-glutamyl-meso-2,6-diaminopimeloyl-D-alanyl-D-alanine + di-trans,octa-cis-undecaprenyl phosphate = di-trans,octa-cis-undecaprenyl diphospho-N-acetyl-alpha-D-muramoyl-L-alanyl-D-glutamyl-meso-2,6-diaminopimeloyl-D-alanyl-D-alanine + UMP. It functions in the pathway cell wall biogenesis; peptidoglycan biosynthesis. Functionally, catalyzes the initial step of the lipid cycle reactions in the biosynthesis of the cell wall peptidoglycan: transfers peptidoglycan precursor phospho-MurNAc-pentapeptide from UDP-MurNAc-pentapeptide onto the lipid carrier undecaprenyl phosphate, yielding undecaprenyl-pyrophosphoryl-MurNAc-pentapeptide, known as lipid I. This chain is Phospho-N-acetylmuramoyl-pentapeptide-transferase, found in Rickettsia rickettsii.